The following is a 192-amino-acid chain: MNTQDVIDIFKQADAILEGHFILTSGRHSATYMQKAKVFMHADLTEKLCRGLAEKIKESIAEPIDYVVGPAIGGLIPSYETSRHLGVPSLWVERVNGVFELRRFEIKKGARVVIVEDIVTTGLSIRETVEALAAAGAEVLASACILDRSGGKVDVGVPLIALAEYEIASYASDALPADLSVLPAIKPGSRNI.

Residue 116 to 124 (EDIVTTGLS) coordinates 5-phospho-alpha-D-ribose 1-diphosphate. 2 residues coordinate orotate: Thr-120 and Arg-148.

This sequence belongs to the purine/pyrimidine phosphoribosyltransferase family. PyrE subfamily. Homodimer. Mg(2+) is required as a cofactor.

It carries out the reaction orotidine 5'-phosphate + diphosphate = orotate + 5-phospho-alpha-D-ribose 1-diphosphate. The protein operates within pyrimidine metabolism; UMP biosynthesis via de novo pathway; UMP from orotate: step 1/2. In terms of biological role, catalyzes the transfer of a ribosyl phosphate group from 5-phosphoribose 1-diphosphate to orotate, leading to the formation of orotidine monophosphate (OMP). The protein is Orotate phosphoribosyltransferase of Bartonella tribocorum (strain CIP 105476 / IBS 506).